The following is a 267-amino-acid chain: tRNA-cytidine(32) 2-sulfurtransferase 2 (267 aa).

A PP-loop motif motif is present at residues Ser-42–Ser-47. Cys-117, Cys-120, and Cys-208 together coordinate [4Fe-4S] cluster.

This sequence belongs to the TtcA family. Homodimer. Mg(2+) serves as cofactor. Requires [4Fe-4S] cluster as cofactor.

It is found in the cytoplasm. It catalyses the reaction cytidine(32) in tRNA + S-sulfanyl-L-cysteinyl-[cysteine desulfurase] + AH2 + ATP = 2-thiocytidine(32) in tRNA + L-cysteinyl-[cysteine desulfurase] + A + AMP + diphosphate + H(+). Its pathway is tRNA modification. In terms of biological role, catalyzes the ATP-dependent 2-thiolation of cytidine in position 32 of tRNA, to form 2-thiocytidine (s(2)C32). The sulfur atoms are provided by the cysteine/cysteine desulfurase (IscS) system. This chain is tRNA-cytidine(32) 2-sulfurtransferase 2, found in Francisella tularensis subsp. holarctica (strain FTNF002-00 / FTA).